A 456-amino-acid polypeptide reads, in one-letter code: Ribonuclease inhibitor (456 aa).

An N-acetylmethionine modification is found at Met1. 15 LRR repeats span residues 15–43, 44–71, 72–100, 101–128, 129–157, 158–185, 186–214, 215–242, 243–271, 272–299, 300–328, 329–356, 357–385, 386–413, and 414–442; these read WTEL…CKDI, SSAV…VGLV, LQGL…CGIL, PGML…LKLL, CEGL…CEPL, ASVL…VRIL, CQGL…CKDL, CDVV…IAAL, CPGL…CKDL, CRVL…ARLL, CESL…CPYF, CSVL…VQEL, CKAL…CSSL, ANVL…VLQL, and LESL…EEQL. Ser86 carries the post-translational modification Phosphoserine.

In terms of assembly, forms high-affinity heterodimers with RNASE1, ANG and RNASE2.

It localises to the cytoplasm. The protein resides in the nucleus. In terms of biological role, ribonuclease inhibitor which inhibits RNASE1, RNASE2 and angiogenin (ANG). May play a role in redox homeostasis. Required to inhibit the cytotoxic tRNA ribonuclease activity of ANG in the cytoplasm in absence of stress. Relocates to the nucleus in response to stress, relieving inhibition of ANG in the cytoplasm, and inhibiting the angiogenic activity of ANG in the nucleus. The protein is Ribonuclease inhibitor (Rnh1) of Mus musculus (Mouse).